Consider the following 154-residue polypeptide: SsrA-binding protein (154 aa).

Belongs to the SmpB family.

The protein localises to the cytoplasm. In terms of biological role, required for rescue of stalled ribosomes mediated by trans-translation. Binds to transfer-messenger RNA (tmRNA), required for stable association of tmRNA with ribosomes. tmRNA and SmpB together mimic tRNA shape, replacing the anticodon stem-loop with SmpB. tmRNA is encoded by the ssrA gene; the 2 termini fold to resemble tRNA(Ala) and it encodes a 'tag peptide', a short internal open reading frame. During trans-translation Ala-aminoacylated tmRNA acts like a tRNA, entering the A-site of stalled ribosomes, displacing the stalled mRNA. The ribosome then switches to translate the ORF on the tmRNA; the nascent peptide is terminated with the 'tag peptide' encoded by the tmRNA and targeted for degradation. The ribosome is freed to recommence translation, which seems to be the essential function of trans-translation. The protein is SsrA-binding protein of Enterococcus hirae (strain ATCC 9790 / DSM 20160 / JCM 8729 / LMG 6399 / NBRC 3181 / NCIMB 6459 / NCDO 1258 / NCTC 12367 / WDCM 00089 / R).